The sequence spans 89 residues: Phosphoribulokinase, chloroplastic (89 aa).

Residues 1 to 22 (LTSVFGGAAEPPRGGNPDSNTL) are disordered.

This sequence belongs to the phosphoribulokinase family.

The protein resides in the plastid. It is found in the chloroplast. It carries out the reaction D-ribulose 5-phosphate + ATP = D-ribulose 1,5-bisphosphate + ADP + H(+). Its pathway is carbohydrate biosynthesis; Calvin cycle. Its activity is regulated as follows. Light regulated via thioredoxin by reversible oxidation/reduction of sulfhydryl/disulfide groups. The protein is Phosphoribulokinase, chloroplastic of Vitis sp. (Grape).